The sequence spans 246 residues: Probable transcriptional regulatory protein Ent638_2432 (246 aa).

It belongs to the TACO1 family.

The protein resides in the cytoplasm. This chain is Probable transcriptional regulatory protein Ent638_2432, found in Enterobacter sp. (strain 638).